The sequence spans 209 residues: Guanylate kinase (209 aa).

The 179-residue stretch at 7–185 (GNLYIVAAPS…AAMELQSIVI (179 aa)) folds into the Guanylate kinase-like domain. ATP is bound at residue 14-21 (APSGGGKT).

The protein belongs to the guanylate kinase family.

The protein resides in the cytoplasm. The enzyme catalyses GMP + ATP = GDP + ADP. Essential for recycling GMP and indirectly, cGMP. This is Guanylate kinase from Legionella pneumophila (strain Lens).